The chain runs to 273 residues: Proteasome subunit beta (273 aa).

Residues 1 to 19 show a composition bias toward polar residues; it reads MQESTANKVAANATSSFTE. Residues 1-23 are disordered; that stretch reads MQESTANKVAANATSSFTEHLQR. The propeptide at 1–50 is removed in mature form; by autocatalysis; sequence MQESTANKVAANATSSFTEHLQRDRPELLPFNRSGQGSATAAAPLQVPHA. Thr51 (nucleophile) is an active-site residue.

This sequence belongs to the peptidase T1B family. As to quaternary structure, the 20S proteasome core is composed of 14 alpha and 14 beta subunits that assemble into four stacked heptameric rings, resulting in a barrel-shaped structure. The two inner rings, each composed of seven catalytic beta subunits, are sandwiched by two outer rings, each composed of seven alpha subunits. The catalytic chamber with the active sites is on the inside of the barrel. Has a gated structure, the ends of the cylinder being occluded by the N-termini of the alpha-subunits. Is capped by the proteasome-associated ATPase, ARC.

It is found in the cytoplasm. It catalyses the reaction Cleavage of peptide bonds with very broad specificity.. It functions in the pathway protein degradation; proteasomal Pup-dependent pathway. With respect to regulation, the formation of the proteasomal ATPase ARC-20S proteasome complex, likely via the docking of the C-termini of ARC into the intersubunit pockets in the alpha-rings, may trigger opening of the gate for substrate entry. Interconversion between the open-gate and close-gate conformations leads to a dynamic regulation of the 20S proteasome proteolysis activity. Component of the proteasome core, a large protease complex with broad specificity involved in protein degradation. The chain is Proteasome subunit beta from Pseudarthrobacter chlorophenolicus (strain ATCC 700700 / DSM 12829 / CIP 107037 / JCM 12360 / KCTC 9906 / NCIMB 13794 / A6) (Arthrobacter chlorophenolicus).